A 325-amino-acid chain; its full sequence is DNA-directed RNA polymerase subunit alpha (325 aa).

An alpha N-terminal domain (alpha-NTD) region spans residues 1–231 (MQTSLLKPKI…DQLSVFAALE (231 aa)). An alpha C-terminal domain (alpha-CTD) region spans residues 246–325 (IDPILLRPVD…ENWPPAGLDK (80 aa)).

Belongs to the RNA polymerase alpha chain family. Homodimer. The RNAP catalytic core consists of 2 alpha, 1 beta, 1 beta' and 1 omega subunit. When a sigma factor is associated with the core the holoenzyme is formed, which can initiate transcription.

The catalysed reaction is RNA(n) + a ribonucleoside 5'-triphosphate = RNA(n+1) + diphosphate. Functionally, DNA-dependent RNA polymerase catalyzes the transcription of DNA into RNA using the four ribonucleoside triphosphates as substrates. The chain is DNA-directed RNA polymerase subunit alpha from Paraburkholderia phytofirmans (strain DSM 17436 / LMG 22146 / PsJN) (Burkholderia phytofirmans).